The sequence spans 100 residues: Large ribosomal subunit protein mL53 (100 aa).

It belongs to the mitochondrion-specific ribosomal protein mL53 family. Component of the mitochondrial large ribosomal subunit (mt-LSU). Mature yeast 74S mitochondrial ribosomes consist of a small (37S) and a large (54S) subunit. The 37S small subunit contains a 15S ribosomal RNA (15S mt-rRNA) and at least 32 different proteins. The 54S large subunit contains a 21S rRNA (21S mt-rRNA) and at least 45 different proteins.

It is found in the mitochondrion. Its function is as follows. Component of the mitochondrial ribosome (mitoribosome), a dedicated translation machinery responsible for the synthesis of mitochondrial genome-encoded proteins, including at least some of the essential transmembrane subunits of the mitochondrial respiratory chain. The mitoribosomes are attached to the mitochondrial inner membrane and translation products are cotranslationally integrated into the membrane. This chain is Large ribosomal subunit protein mL53 (mrpl44), found in Schizosaccharomyces pombe (strain 972 / ATCC 24843) (Fission yeast).